The sequence spans 152 residues: Snaclec coagulation factor IX/factor X-binding protein subunit A (152 aa).

The first 23 residues, 1-23 (MGRFIFVSFGLLVVAASLSGTGA), serve as a signal peptide directing secretion. Intrachain disulfides connect C25–C36, C53–C150, and C125–C142. In terms of domain architecture, C-type lectin spans 32–151 (YEGHCYKAFE…CGQRIPFVCE (120 aa)). Ca(2+) is bound by residues S64, E66, and E70. Ca(2+) is bound at residue E151.

It belongs to the snaclec family. In terms of assembly, heterodimer of subunits A and B; disulfide-linked. In terms of tissue distribution, expressed by the venom gland.

It is found in the secreted. Functionally, anticoagulant protein which binds to the gamma-carboxyglutamic acid-domain regions of factors IX (F9) and factor X (F10) in the presence of calcium with a 1 to 1 stoichiometry. This is Snaclec coagulation factor IX/factor X-binding protein subunit A from Trimeresurus stejnegeri (Chinese green tree viper).